A 399-amino-acid polypeptide reads, in one-letter code: Probable sugar efflux transporter (399 aa).

A run of 12 helical transmembrane segments spans residues 15–35, 50–70, 81–101, 103–123, 136–156, 168–188, 209–229, 246–266, 273–293, 301–321, 333–353, and 364–384; these read VVTL…PVGL, VGMM…PFML, LIGL…AWNF, VLVI…SITS, AQAL…GIPI, MTFL…VKLL, PALV…YTAY, FATV…ILFG, ASGL…LLLP, LMLL…GMQV, VAMS…ALVG, and SVGY…LMIF.

The protein belongs to the major facilitator superfamily. SotB (TC 2.A.1.2) family.

Its subcellular location is the cell inner membrane. In terms of biological role, involved in the efflux of sugars. The physiological role may be the reduction of the intracellular concentration of toxic sugars or sugar metabolites. This chain is Probable sugar efflux transporter, found in Klebsiella pneumoniae subsp. pneumoniae (strain ATCC 700721 / MGH 78578).